A 524-amino-acid chain; its full sequence is MSDNGELEDKPPAPPVRMSSTIFSTGGKDPLSANHSLKPLPSVPEEKKPRNKIISIFSGTEKGSKKKEKERPEISPPSDFEHTIHVGFDAVTGEFTGMPEQWARLLQTSNITKLEQKKNPQAVLDVLKFYDSNTVKQKYLSFTPPEKDGFPSGTPALNTKGSETSAVVTEEDDDDEDAAPPVIAPRPDHTKSIYTRSVIDPIPAPVGDSNVDSGAKSSDKQKKKAKMTDEEIMEKLRTIVSIGDPKKKYTRYEKIGQGASGTVFTATDVALGQEVAIKQINLQKQPKKELIINEILVMKELKNPNIVNFLDSYLVGDELFVVMEYLAGGSLTDVVTETCMDEAQIAAVCRECLQALEFLHANQVIHRDIKSDNVLLGMEGSVKLTDFGFCAQITPEQSKRSTMVGTPYWMAPEVVTRKAYGPKVDIWSLGIMAIEMVEGEPPYLNENPLRALYLIATNGTPELQNPEKLSPIFRDFLNRCLEMDVEKRGSAKELLQHPFLKLAKPLSSLTPLILAAKEAMKSNR.

A disordered region spans residues 1-81; that stretch reads MSDNGELEDK…PEISPPSDFE (81 aa). Position 2 is an N-acetylserine (serine 2). A phosphoserine mark is found at serine 2, serine 20, serine 55, and serine 58. Threonine 60 is subject to Phosphothreonine. Lysine 62 is subject to N6-acetyllysine. Residue serine 64 is modified to Phosphoserine. Basic and acidic residues predominate over residues 67–81; sequence KEKERPEISPPSDFE. The interval 69–112 is GTPase-binding; it reads KERPEISPPSDFEHTIHVGFDAVTGEFTGMPEQWARLLQTSNIT. The tract at residues 69–137 is autoregulatory region; the sequence is KERPEISPPS…KFYDSNTVKQ (69 aa). Positions 74 to 87 constitute a CRIB domain; that stretch reads ISPPSDFEHTIHVG. An N6-acetyllysine modification is found at lysine 128. Threonine 134 carries the phosphothreonine modification. Tyrosine 139 is modified (phosphotyrosine). At serine 141 the chain carries Phosphoserine. The disordered stretch occupies residues 142-188; it reads FTPPEKDGFPSGTPALNTKGSETSAVVTEEDDDDEDAAPPVIAPRPD. Phosphothreonine is present on threonine 143. A Phosphoserine modification is found at serine 152. Residues threonine 154, threonine 159, and threonine 169 each carry the phosphothreonine modification. Positions 155–167 are enriched in polar residues; it reads PALNTKGSETSAV. Acidic residues predominate over residues 169-178; it reads TEEDDDDEDA. Serine 197 is modified (phosphoserine). A disordered region spans residues 204-228; it reads APVGDSNVDSGAKSSDKQKKKAKMT. A Nuclear localization signal motif is present at residues 245–251; sequence PKKKYTR. Residues 249-499 form the Protein kinase domain; it reads YTRYEKIGQG…SAKELLQHPF (251 aa). Residues 255–263 and lysine 278 contribute to the ATP site; that span reads IGQGASGTV. Arginine 367 functions as the Proton acceptor in the catalytic mechanism. Threonine 402 is subject to Phosphothreonine; by autocatalysis.

It belongs to the protein kinase superfamily. STE Ser/Thr protein kinase family. STE20 subfamily. In terms of assembly, interacts tightly with GTP-bound but not GDP-bound CDC42/p21 and RAC1. Interacts with SH3MD4. Interacts with SCRIB. Interacts with ARHGEF7 and GIT1. PAK-2p34 interacts with ARHGAP10. Interacts with RAC1. Full-length PAK2 is autophosphorylated when activated by CDC42/p21. Following cleavage, both peptides, PAK-2p27 and PAK-2p34, become highly autophosphorylated. Autophosphorylation of PAK-2p27 can occur in the absence of any effectors and is dependent on phosphorylation of Thr-402, because PAK-2p27 is acting as an exogenous substrate. In terms of processing, during apoptosis proteolytically cleaved by caspase-3 or caspase-3-like proteases to yield active PAK-2p34. Post-translationally, ubiquitinated, leading to its proteasomal degradation.

The protein localises to the cytoplasm. It localises to the nucleus. Its subcellular location is the perinuclear region. The protein resides in the membrane. It carries out the reaction L-seryl-[protein] + ATP = O-phospho-L-seryl-[protein] + ADP + H(+). The enzyme catalyses L-threonyl-[protein] + ATP = O-phospho-L-threonyl-[protein] + ADP + H(+). Its activity is regulated as follows. Activated by binding small G proteins. Binding of GTP-bound CDC42 or RAC1 to the autoregulatory region releases monomers from the autoinhibited dimer, enables phosphorylation of Thr-402 and allows the kinase domain to adopt an active structure. Following caspase cleavage, autophosphorylated PAK-2p34 is constitutively active. Serine/threonine protein kinase that plays a role in a variety of different signaling pathways including cytoskeleton regulation, cell motility, cell cycle progression, apoptosis or proliferation. Acts as a downstream effector of the small GTPases CDC42 and RAC1. Activation by the binding of active CDC42 and RAC1 results in a conformational change and a subsequent autophosphorylation on several serine and/or threonine residues. Full-length PAK2 stimulates cell survival and cell growth. Phosphorylates MAPK4 and MAPK6 and activates the downstream target MAPKAPK5, a regulator of F-actin polymerization and cell migration. Phosphorylates JUN and plays an important role in EGF-induced cell proliferation. Phosphorylates many other substrates including histone H4 to promote assembly of H3.3 and H4 into nucleosomes, BAD, ribosomal protein S6, or MBP. Phosphorylates CASP7, thereby preventing its activity. Additionally, associates with ARHGEF7 and GIT1 to perform kinase-independent functions such as spindle orientation control during mitosis. On the other hand, apoptotic stimuli such as DNA damage lead to caspase-mediated cleavage of PAK2, generating PAK-2p34, an active p34 fragment that translocates to the nucleus and promotes cellular apoptosis involving the JNK signaling pathway. Caspase-activated PAK2 phosphorylates MKNK1 and reduces cellular translation. In Mus musculus (Mouse), this protein is Serine/threonine-protein kinase PAK 2 (Pak2).